The primary structure comprises 274 residues: Triosephosphate isomerase (274 aa).

Residue 13–15 participates in substrate binding; that stretch reads NWK. His-98 (electrophile) is an active-site residue. Glu-170 (proton acceptor) is an active-site residue. Gly-176 and Ser-216 together coordinate substrate.

It belongs to the triosephosphate isomerase family. In terms of assembly, homodimer.

The protein resides in the cytoplasm. It carries out the reaction D-glyceraldehyde 3-phosphate = dihydroxyacetone phosphate. The protein operates within carbohydrate biosynthesis; gluconeogenesis. It functions in the pathway carbohydrate degradation; glycolysis; D-glyceraldehyde 3-phosphate from glycerone phosphate: step 1/1. In terms of biological role, involved in the gluconeogenesis. Catalyzes stereospecifically the conversion of dihydroxyacetone phosphate (DHAP) to D-glyceraldehyde-3-phosphate (G3P). This Onion yellows phytoplasma (strain OY-M) protein is Triosephosphate isomerase.